Here is a 160-residue protein sequence, read N- to C-terminus: Cytochrome c-type biogenesis protein CcmE (160 aa).

Over 1–7 (MTRKQRR) the chain is Cytoplasmic. Residues 8-28 (ATFIAVSLGILALAVGLVLYA) form a helical; Signal-anchor for type II membrane protein membrane-spanning segment. Residues 29 to 160 (MRDSIVYFYS…SETYGQGSYP (132 aa)) lie on the Periplasmic side of the membrane. Heme contacts are provided by H122 and Y126. The interval 141 to 160 (WQGEGAEAPHSETYGQGSYP) is disordered.

It belongs to the CcmE/CycJ family.

Its subcellular location is the cell inner membrane. In terms of biological role, heme chaperone required for the biogenesis of c-type cytochromes. Transiently binds heme delivered by CcmC and transfers the heme to apo-cytochromes in a process facilitated by CcmF and CcmH. In Parvibaculum lavamentivorans (strain DS-1 / DSM 13023 / NCIMB 13966), this protein is Cytochrome c-type biogenesis protein CcmE.